We begin with the raw amino-acid sequence, 327 residues long: Zinc transport protein ZntB (327 aa).

The Cytoplasmic portion of the chain corresponds to 1–273 (MEGIKGSEVN…SRRTYTMSLM (273 aa)). The chain crosses the membrane as a helical span at residues 274-294 (AMVFLPSTFLTGLFGVNLGGI). Over 295–300 (PGGGYQ) the chain is Periplasmic. Residues 301-321 (FGFSAFCIMLVVLIGGVAWWL) traverse the membrane as a helical segment. The Cytoplasmic segment spans residues 322–327 (HRSKWL).

It belongs to the CorA metal ion transporter (MIT) (TC 1.A.35) family.

The protein resides in the cell inner membrane. It catalyses the reaction Zn(2+)(out) + H(+)(out) = Zn(2+)(in) + H(+)(in). In terms of biological role, zinc transporter. Acts as a Zn(2+):proton symporter, which likely mediates zinc ion uptake. The sequence is that of Zinc transport protein ZntB from Enterobacter sp. (strain 638).